The following is a 588-amino-acid chain: Ribonuclease Y (588 aa).

The chain crosses the membrane as a helical span at residues 7–27; that stretch reads VLLVAVLLLALIVLGAVLVGV. The disordered stretch occupies residues 130-162; sequence ARRSGEREAAVLATTTREQAAEVERRAARMDDR. The span at 148–162 shows a compositional bias: basic and acidic residues; that stretch reads QAAEVERRAARMDDR. Residues 278-359 form the KH domain; sequence VVSVLHLPGD…HRIEEVHDLA (82 aa). Residues 404–497 enclose the HD domain; that stretch reads VLKHLVETAH…TQASDACSGG (94 aa).

The protein belongs to the RNase Y family.

It localises to the cell membrane. Endoribonuclease that initiates mRNA decay. In Salinispora arenicola (strain CNS-205), this protein is Ribonuclease Y.